A 486-amino-acid polypeptide reads, in one-letter code: Wax ester synthase/diacylglycerol acyltransferase 11 (486 aa).

The Cytoplasmic segment spans residues 1-192 (MGEDKKTARE…CNSGFFNKIW (192 aa)). His-144 functions as the Proton acceptor in the catalytic mechanism. Residues 193–213 (WLFVGLWFILRLLFNTFVDIL) traverse the membrane as a helical segment. Topologically, residues 214–486 (MFALTIFVLR…LERGLYEIEV (273 aa)) are extracellular.

In the N-terminal section; belongs to the long-chain O-acyltransferase family. In terms of tissue distribution, mostly expressed in inflorescences and flowers, especially at the periphery of petal epidermal cells.

It localises to the cell membrane. Its subcellular location is the endoplasmic reticulum membrane. The enzyme catalyses an acyl-CoA + a 1,2-diacyl-sn-glycerol = a triacyl-sn-glycerol + CoA. The catalysed reaction is a long chain fatty alcohol + a fatty acyl-CoA = a wax ester + CoA. Its pathway is glycerolipid metabolism; triacylglycerol biosynthesis. It functions in the pathway lipid metabolism. Bifunctional wax ester synthase/diacylglycerol acyltransferase. Involved in cuticular wax biosynthesis. Required for petals development, probably by mediating the production of fatty acids at the plasma membrane in the petal epidermis acting as lubricants that makes petal elongation smooth in narrow space between the sepals and the anthers inside floral buds. This is Wax ester synthase/diacylglycerol acyltransferase 11 from Arabidopsis thaliana (Mouse-ear cress).